Consider the following 278-residue polypeptide: Biotin synthase (278 aa).

The 227-residue stretch at 1-227 (MQIMLCAISN…QSVVMVAGGR (227 aa)) folds into the Radical SAM core domain. Positions 16, 20, and 23 each coordinate [4Fe-4S] cluster. Residues C60, C95, and C153 each coordinate [2Fe-2S] cluster.

Belongs to the radical SAM superfamily. Biotin synthase family. In terms of assembly, homodimer. It depends on [4Fe-4S] cluster as a cofactor. Requires [2Fe-2S] cluster as cofactor.

The catalysed reaction is (4R,5S)-dethiobiotin + (sulfur carrier)-SH + 2 reduced [2Fe-2S]-[ferredoxin] + 2 S-adenosyl-L-methionine = (sulfur carrier)-H + biotin + 2 5'-deoxyadenosine + 2 L-methionine + 2 oxidized [2Fe-2S]-[ferredoxin]. It participates in cofactor biosynthesis; biotin biosynthesis; biotin from 7,8-diaminononanoate: step 2/2. Its function is as follows. Catalyzes the conversion of dethiobiotin (DTB) to biotin by the insertion of a sulfur atom into dethiobiotin via a radical-based mechanism. This is Biotin synthase from Campylobacter jejuni subsp. jejuni serotype O:6 (strain 81116 / NCTC 11828).